Consider the following 299-residue polypeptide: Oxygen-dependent coproporphyrinogen-III oxidase (299 aa).

Ser92 contacts substrate. Residues His96 and His106 each contribute to the a divalent metal cation site. The active-site Proton donor is His106. 108–110 is a binding site for substrate; the sequence is NVR. 2 residues coordinate a divalent metal cation: His145 and His175. Residues 240–275 are important for dimerization; sequence YVEFNLVWDRGTLFGLQTGGRTESILMSMPPLVRWE. A substrate-binding site is contributed by 258 to 260; that stretch reads GGR.

It belongs to the aerobic coproporphyrinogen-III oxidase family. As to quaternary structure, homodimer. The cofactor is a divalent metal cation.

The protein localises to the cytoplasm. The enzyme catalyses coproporphyrinogen III + O2 + 2 H(+) = protoporphyrinogen IX + 2 CO2 + 2 H2O. It participates in porphyrin-containing compound metabolism; protoporphyrin-IX biosynthesis; protoporphyrinogen-IX from coproporphyrinogen-III (O2 route): step 1/1. Its function is as follows. Involved in the heme biosynthesis. Catalyzes the aerobic oxidative decarboxylation of propionate groups of rings A and B of coproporphyrinogen-III to yield the vinyl groups in protoporphyrinogen-IX. The chain is Oxygen-dependent coproporphyrinogen-III oxidase from Enterobacter sp. (strain 638).